The chain runs to 4466 residues: Dynein beta chain, ciliary (4466 aa).

The stem stretch occupies residues 1–1813 (MGDVVDARLD…YANICDAQFK (1813 aa)). 154-161 (AGQVKGKT) contributes to the ATP binding site. 6 coiled-coil regions span residues 482-502 (QEFLEDYEEFEKKVFDLDRRL), 627-643 (QKYEEMLNLLNKYEQKV), 734-805 (VLEV…WTKQ), 1036-1056 (TLDQFKEQVDTYEKIYSEADE), 1306-1337 (WLEINVEQMEMDCKKFAKDIRSLDKEMRAWDA), and 1443-1468 (LLKSNEELIETLEDNQVQLQNLMTSK). 4 AAA regions span residues 1814-2035 (YSYE…VLVV), 2095-2316 (KVVK…IRFK), 2422-2669 (ELDP…VFQG), and 2767-3016 (TYNE…ERRY). Residues 1852 to 1859 (GPAGTGKT), 2133 to 2140 (GNAGTGKS), 2460 to 2467 (GNAGLGKS), and 2805 to 2812 (GVGGSGKQ) each bind ATP. 3 coiled-coil regions span residues 3033-3134 (SLLA…AKAE), 3263-3325 (EPKR…SRTI), and 3573-3642 (QERP…EEAK). Positions 3033 to 3325 (SLLAMKSKEL…QEAEATSRTI (293 aa)) are stalk. AAA regions lie at residues 3409–3636 (LTDD…EISV) and 3846–4072 (VRNF…VLYN).

It belongs to the dynein heavy chain family. Consists of at least two heavy chains (alpha and beta), three intermediate chains and several light chains.

The protein localises to the cell projection. Its subcellular location is the cilium. The protein resides in the flagellum. It localises to the cytoplasm. It is found in the cytoskeleton. The protein localises to the flagellum axoneme. Force generating protein of eukaryotic cilia and flagella. Produces force towards the minus ends of microtubules. Dynein has ATPase activity; the force-producing power stroke is thought to occur on release of ADP. The polypeptide is Dynein beta chain, ciliary (Heliocidaris crassispina (Sea urchin)).